A 318-amino-acid chain; its full sequence is Cytochrome c biogenesis protein CcsA (318 aa).

8 consecutive transmembrane segments (helical) span residues 17–37 (VLAL…ISFW), 45–65 (SAVV…QLVL), 75–95 (ISNL…AQLL), 104–124 (IVSA…SFAL), 149–169 (VIMC…AVLF), 224–244 (TITV…VWAN), 258–275 (TWAL…HTRF), and 287–307 (VAVA…LLGI).

The protein belongs to the CcmF/CycK/Ccl1/NrfE/CcsA family. As to quaternary structure, may interact with ccs1.

The protein localises to the cellular thylakoid membrane. Required during biogenesis of c-type cytochromes (cytochrome c6 and cytochrome f) at the step of heme attachment. The chain is Cytochrome c biogenesis protein CcsA from Prochlorococcus marinus (strain MIT 9313).